Consider the following 218-residue polypeptide: Cytidylate kinase (218 aa).

10-18 (GPAAAGKST) is an ATP binding site.

This sequence belongs to the cytidylate kinase family. Type 1 subfamily.

The protein resides in the cytoplasm. The catalysed reaction is CMP + ATP = CDP + ADP. It carries out the reaction dCMP + ATP = dCDP + ADP. This chain is Cytidylate kinase, found in Staphylococcus haemolyticus (strain JCSC1435).